The sequence spans 218 residues: 3,4-dihydroxy-2-butanone 4-phosphate synthase (218 aa).

Residues 38–39 (RE), Asp-43, 151–155 (RRGHT), and Glu-175 each bind D-ribulose 5-phosphate. Residue Glu-39 coordinates Mg(2+). His-154 provides a ligand contact to Mg(2+).

It belongs to the DHBP synthase family. In terms of assembly, homodimer. It depends on Mg(2+) as a cofactor. The cofactor is Mn(2+).

It carries out the reaction D-ribulose 5-phosphate = (2S)-2-hydroxy-3-oxobutyl phosphate + formate + H(+). Its pathway is cofactor biosynthesis; riboflavin biosynthesis; 2-hydroxy-3-oxobutyl phosphate from D-ribulose 5-phosphate: step 1/1. Catalyzes the conversion of D-ribulose 5-phosphate to formate and 3,4-dihydroxy-2-butanone 4-phosphate. In Vibrio atlanticus (strain LGP32) (Vibrio splendidus (strain Mel32)), this protein is 3,4-dihydroxy-2-butanone 4-phosphate synthase.